We begin with the raw amino-acid sequence, 541 residues long: MAKQIKFGEEARRALERGVNQLADTVKVTLGPKGRNVVLDKKFGSPMITNDGVTIAKEIELEDPFENMGAQLVKEVATKTNDVAGDGTTTATLLAQAIIREGLKNVAAGANPMLLKKGIAKAVDAAVEGIKEISQKVKGKEDIARVASISANDEVIGELIADAMEKVTNDGVITVEEAKTMGTNLEIVEGMQFDRGYVSPYMVTDTEKMEAVLDEPYILITDKKISNIQDILPLLEQIVQQGKKLVIIAEDVEGEALATLLVNKLRGTFTCVAVKAPGFGDRRKAMLEDIAILTGGQVITSDLGLELKDTTVEQLGRARQVKVQKENTIIVDGAGDPKEIQKRIASIKSQIEETTSDFDREKLQERLAKLAGGVAVIQVGAATETEMKEKKLRIEDALAATKAAVEEGIVAGGGTALVNVIPKVAKVLDTVSGDEKTGVQIILRALEEPVRQIAENAGLEGSVIVEKVKASEPGIGFDAYNEKYVNMIEAGIVDPAKVTRSALQNAASVASMVLTTESVVADIPEKETSGGPGGAGMGGMY.

ATP-binding positions include 29–32 (TLGP), 86–90 (DGTTT), G413, and D494.

It belongs to the chaperonin (HSP60) family. As to quaternary structure, forms a cylinder of 14 subunits composed of two heptameric rings stacked back-to-back. Interacts with the co-chaperonin GroES.

The protein localises to the cytoplasm. It catalyses the reaction ATP + H2O + a folded polypeptide = ADP + phosphate + an unfolded polypeptide.. In terms of biological role, together with its co-chaperonin GroES, plays an essential role in assisting protein folding. The GroEL-GroES system forms a nano-cage that allows encapsulation of the non-native substrate proteins and provides a physical environment optimized to promote and accelerate protein folding. The chain is Chaperonin GroEL from Acetivibrio thermocellus (strain ATCC 27405 / DSM 1237 / JCM 9322 / NBRC 103400 / NCIMB 10682 / NRRL B-4536 / VPI 7372) (Clostridium thermocellum).